The following is a 61-amino-acid chain: [Thr6]-bradykinyl-Val,Asp (61 aa).

The first 22 residues, 1–22, serve as a signal peptide directing secretion; it reads MSFLKKSLFLVLFLGLVSFSIC. Residues 23 to 50 constitute a propeptide that is removed on maturation; the sequence is EEEKRETEEEENEDEMDKESEEKRESPE. The segment at 24 to 61 is disordered; sequence EEKRETEEEENEDEMDKESEEKRESPERPPGFTPFRVD. Acidic residues predominate over residues 30 to 41; it reads EEEENEDEMDKE. 4-hydroxyproline; in form [Hyp3,Thr6]-bradykinyl-Val,Asp and [Hyp3,Thr6]-bradykinin is present on P53.

Belongs to the frog skin active peptide (FSAP) family. Bradykinin-related peptide subfamily. As to expression, expressed by the skin glands.

The protein resides in the secreted. Induces relaxation of rat smooth muscle from tail artery (EC(50)=16.8 nM) and contraction of that from ileum (EC(50)=205 nM), urinary bladder (EC(50)=895 nM) and uterus (EC(50)=60.3 nM). Binds to both bradykinin receptor B1 (BDKRB1) and B2 (BDKRB2). In terms of biological role, [Hyp3,Thr6]-bradykinin: Induces relaxation of rat smooth muscle from tail artery (EC(50)=56.7 nM) and contraction of that from ileum (EC(50)=588 nM), urinary bladder (EC(50)=4.6 uM) and uterus (EC(50)=3.9 nM). Binds to both bradykinin receptor B1 (BDKRB1) and B2 (BDKRB2). In arterial smooth muscle, the effect via BDKRB1 is stronger, in uterus, ileum and urinary bladder that via BDKRB2. Functionally, induces relaxation of rat smooth muscle from tail artery (EC(50)=10.8 nM) and contraction of that from ileum (EC(50)=645 nM), urinary bladder (EC(50)=1.1 uM) and uterus (EC(50)=1.2 uM). Binds to both bradykinin receptor B1 (BDKRB1) and B2 (BDKRB2). Apart from uterus smooth muscle, the effect via B2 is stronger. Its function is as follows. [Hyp3,Thr6]-bradykinyl-Val,Asp: Induces relaxation of rat smooth muscle from tail artery (EC(50)=3.5 nM) and contraction of that from ileum (EC(50)=223 nM), urinary bladder (EC(50)=1.5 uM) and uterus (EC(50)=356 nM). Binds to both bradykinin receptor B1 (BDKRB1) and B2 (BDKRB2); the effects via B2 a stronger. This is [Thr6]-bradykinyl-Val,Asp from Agalychnis callidryas (Red-eyed tree frog).